Consider the following 199-residue polypeptide: Protein GrpE (199 aa).

Residues 1–27 are disordered; that stretch reads MSEQNTNHESPEQNVAHDNIEHSDSIL. A compositionally biased stretch (basic and acidic residues) spans 18-27; that stretch reads DNIEHSDSIL.

Belongs to the GrpE family. In terms of assembly, homodimer.

The protein localises to the cytoplasm. In terms of biological role, participates actively in the response to hyperosmotic and heat shock by preventing the aggregation of stress-denatured proteins, in association with DnaK and GrpE. It is the nucleotide exchange factor for DnaK and may function as a thermosensor. Unfolded proteins bind initially to DnaJ; upon interaction with the DnaJ-bound protein, DnaK hydrolyzes its bound ATP, resulting in the formation of a stable complex. GrpE releases ADP from DnaK; ATP binding to DnaK triggers the release of the substrate protein, thus completing the reaction cycle. Several rounds of ATP-dependent interactions between DnaJ, DnaK and GrpE are required for fully efficient folding. This is Protein GrpE from Psychrobacter sp. (strain St1).